The sequence spans 154 residues: CASP-like protein 5B2 (154 aa).

The Cytoplasmic portion of the chain corresponds to Met1–Arg17. Residues Val18–Ala38 traverse the membrane as a helical segment. The Extracellular portion of the chain corresponds to Ser39 to Ala42. Residues Phe43–Leu63 traverse the membrane as a helical segment. Residues Asp64–Asp87 lie on the Cytoplasmic side of the membrane. Residues Trp88–Leu107 traverse the membrane as a helical segment. At Phe108–Thr130 the chain is on the extracellular side. A helical transmembrane segment spans residues Ala131–Leu151. The Cytoplasmic segment spans residues Ala152–Phe154.

It belongs to the Casparian strip membrane proteins (CASP) family. As to quaternary structure, homodimer and heterodimers.

It is found in the cell membrane. The sequence is that of CASP-like protein 5B2 from Zea mays (Maize).